Consider the following 510-residue polypeptide: MIWHVQNENFILDSTRIFMKAFHLLLFDGSLIFPECILIFGLILLLMIDSTSDQKDIPWLYFISSTSLVMSITALLFRWREEPMISFSGNFQTNNFNEIFQFLILLCSTLCIPLSVEYIECTEMAITEFLLFVLTATLGGMFLCGANDLITIFVAPECFSLCSYLLSGYTKKDVRSNEATMKYLLMGGASSSILVHGFSWLYGSSGGEIELQEIVNGLINTQMYNSPGISIALIFITVGIGFKLSPAPSHQWTPDVYEGSPTPVVAFLSVTSKVAASASATRIFDIPFYFSSNEWHLLLEILAILSMILGNLIAITQTSMKRMLAYSSIGQIGYVIIGIIVGDSNDGYASMITYMLFYISMNLGTFACIVLFGLRTGTDNIRDYAGLYTKDPFLALSLALCLLSLGGLPPLAGFFGKLYLFWCGWQAGLYFLVLIGLLTSVVSIYYYLKIIKLLMTGRNQEITPHVRNYRRSPLRSNNSIELSMIVCVIASTIPGISMNPIIAIAQDSLF.

13 consecutive transmembrane segments (helical) span residues 24-44 (LLLF…GLIL), 57-77 (IPWL…ALLF), 99-119 (IFQF…VEYI), 124-144 (MAIT…MFLC), 149-169 (LITI…LSGY), 183-203 (YLLM…WLYG), 227-247 (PGIS…LSPA), 295-315 (WHLL…LIAI), 323-343 (MLAY…IVGD), 354-374 (YMLF…LFGL), 395-415 (ALSL…AGFF), 418-438 (LYLF…IGLL), and 484-504 (MIVC…IIAI).

This sequence belongs to the complex I subunit 2 family. In terms of assembly, NDH is composed of at least 16 different subunits, 5 of which are encoded in the nucleus.

It is found in the plastid. The protein resides in the chloroplast thylakoid membrane. The enzyme catalyses a plastoquinone + NADH + (n+1) H(+)(in) = a plastoquinol + NAD(+) + n H(+)(out). The catalysed reaction is a plastoquinone + NADPH + (n+1) H(+)(in) = a plastoquinol + NADP(+) + n H(+)(out). Its function is as follows. NDH shuttles electrons from NAD(P)H:plastoquinone, via FMN and iron-sulfur (Fe-S) centers, to quinones in the photosynthetic chain and possibly in a chloroplast respiratory chain. The immediate electron acceptor for the enzyme in this species is believed to be plastoquinone. Couples the redox reaction to proton translocation, and thus conserves the redox energy in a proton gradient. This chain is NAD(P)H-quinone oxidoreductase subunit 2 A, chloroplastic, found in Solanum bulbocastanum (Wild potato).